The following is a 456-amino-acid chain: Multidrug resistance protein NorM (456 aa).

12 helical membrane passes run 11–31 (LIKLATPVLIASVAQTGMGFV), 53–73 (IWLPSILFGIGLLMALVPVVA), 93–113 (VMALLISIPIIGVLFQTQWIL), 126–146 (TIGYIHAVMFAVPAFLLFQTL), 159–179 (AMVIGFIGLLLNIPLNWMFVY), 189–209 (GVGCGVATAIVYWIMFLLLLL), 242–262 (FPVAAALFFEVTLFAVVALLV), 276–296 (AINFSSLVFMLPMSIGAATSI), 315–335 (HVGILVGLSTAVFTALLTVIL), 356–376 (LLIFAAIYQCTDAIQVIAAGA), 391–411 (FIAYWLLGLPTGYVLGLTDWI), and 417–437 (AQGFWIGFIVGLSSAAAMLGV).

This sequence belongs to the multi antimicrobial extrusion (MATE) (TC 2.A.66.1) family.

It is found in the cell inner membrane. Multidrug efflux pump that functions as a Na(+)/drug antiporter. This Vibrio vulnificus (strain YJ016) protein is Multidrug resistance protein NorM (norM).